A 252-amino-acid polypeptide reads, in one-letter code: Cell division protein ZapD (252 aa).

This sequence belongs to the ZapD family. Interacts with FtsZ.

It localises to the cytoplasm. In terms of biological role, cell division factor that enhances FtsZ-ring assembly. Directly interacts with FtsZ and promotes bundling of FtsZ protofilaments, with a reduction in FtsZ GTPase activity. This is Cell division protein ZapD from Ralstonia nicotianae (strain ATCC BAA-1114 / GMI1000) (Ralstonia solanacearum).